The primary structure comprises 328 residues: Formimidoylglutamase (328 aa).

Mn(2+) is bound by residues His133, Asp159, His161, Asp163, Asp253, and Asp255.

Belongs to the arginase family. It depends on Mn(2+) as a cofactor.

The enzyme catalyses N-formimidoyl-L-glutamate + H2O = formamide + L-glutamate. It functions in the pathway amino-acid degradation; L-histidine degradation into L-glutamate; L-glutamate from N-formimidoyl-L-glutamate (hydrolase route): step 1/1. In terms of biological role, catalyzes the conversion of N-formimidoyl-L-glutamate to L-glutamate and formamide. The protein is Formimidoylglutamase of Streptococcus pyogenes serotype M1.